The primary structure comprises 264 residues: Glutamate racemase (264 aa).

Residues 10-11 (DS) and 42-43 (YG) each bind substrate. Residue Cys-73 is the Proton donor/acceptor of the active site. 74-75 (NT) is a binding site for substrate. The active-site Proton donor/acceptor is Cys-183. 184-185 (TH) is a binding site for substrate.

It belongs to the aspartate/glutamate racemases family.

It carries out the reaction L-glutamate = D-glutamate. The protein operates within cell wall biogenesis; peptidoglycan biosynthesis. In terms of biological role, provides the (R)-glutamate required for cell wall biosynthesis. In Streptococcus pyogenes serotype M4 (strain MGAS10750), this protein is Glutamate racemase.